A 369-amino-acid polypeptide reads, in one-letter code: Methylthioribose-1-phosphate isomerase (369 aa).

Substrate contacts are provided by residues 54-56 (RGA), R95, and Q208. D249 serves as the catalytic Proton donor. Residue 259–260 (NK) participates in substrate binding.

The protein belongs to the eIF-2B alpha/beta/delta subunits family. MtnA subfamily.

The catalysed reaction is 5-(methylsulfanyl)-alpha-D-ribose 1-phosphate = 5-(methylsulfanyl)-D-ribulose 1-phosphate. It functions in the pathway amino-acid biosynthesis; L-methionine biosynthesis via salvage pathway; L-methionine from S-methyl-5-thio-alpha-D-ribose 1-phosphate: step 1/6. In terms of biological role, catalyzes the interconversion of methylthioribose-1-phosphate (MTR-1-P) into methylthioribulose-1-phosphate (MTRu-1-P). The polypeptide is Methylthioribose-1-phosphate isomerase (Desulfosudis oleivorans (strain DSM 6200 / JCM 39069 / Hxd3) (Desulfococcus oleovorans)).